We begin with the raw amino-acid sequence, 289 residues long: Probable endonuclease 4 (289 aa).

The Zn(2+) site is built by histidine 75, histidine 115, glutamate 153, aspartate 187, histidine 190, histidine 224, aspartate 237, histidine 239, and glutamate 269.

Belongs to the AP endonuclease 2 family. The cofactor is Zn(2+).

It catalyses the reaction Endonucleolytic cleavage to 5'-phosphooligonucleotide end-products.. Functionally, endonuclease IV plays a role in DNA repair. It cleaves phosphodiester bonds at apurinic or apyrimidinic (AP) sites, generating a 3'-hydroxyl group and a 5'-terminal sugar phosphate. This Chlamydia abortus (strain DSM 27085 / S26/3) (Chlamydophila abortus) protein is Probable endonuclease 4.